Reading from the N-terminus, the 177-residue chain is Anti-apoptotic protein NR13 (177 aa).

The short motif at 75-94 (LEAEGGLNWGRLLALVVFTG) is the BH1 element. A helical membrane pass occupies residues 86–106 (LLALVVFTGTLAAALAESGCE). Residues 126–141 (EWLEEHGGWDGFCRFF) carry the BH2 motif. Residues 156–176 (SNAIMAAAGFGIAGLAFLLVV) traverse the membrane as a helical segment.

It belongs to the Bcl-2 family. Interacts with BAX. In terms of tissue distribution, expressed preferentially in heart, skeletal muscle, retina, optical tectum and bursa of Fabricius.

Its subcellular location is the cell membrane. Its function is as follows. Shows anti-apoptotic properties. Counteract the pro-apoptotic activity of BAX. The polypeptide is Anti-apoptotic protein NR13 (NR13) (Gallus gallus (Chicken)).